Reading from the N-terminus, the 319-residue chain is Replication factor C small subunit 2 (319 aa).

44–51 (GPPGTGKT) is an ATP binding site.

The protein belongs to the activator 1 small subunits family. RfcS subfamily. As to quaternary structure, heteromultimer composed of small subunits (RfcS) and large subunits (RfcL).

Part of the RFC clamp loader complex which loads the PCNA sliding clamp onto DNA. The polypeptide is Replication factor C small subunit 2 (Pyrobaculum aerophilum (strain ATCC 51768 / DSM 7523 / JCM 9630 / CIP 104966 / NBRC 100827 / IM2)).